Consider the following 101-residue polypeptide: Small ribosomal subunit protein bS18c (101 aa).

Belongs to the bacterial ribosomal protein bS18 family. Part of the 30S ribosomal subunit.

The protein resides in the plastid. It localises to the chloroplast. The polypeptide is Small ribosomal subunit protein bS18c (Oenothera biennis (German evening primrose)).